Consider the following 959-residue polypeptide: MSDIIIDLSRDSKFDELGLKRLRESYMMREETSPQERFAYVCKQVGTDRDHSQRLYEYTSKHWLSLSTPILSFGKANHGLPISCYLSWIEDTKEGLIDTLSEVNQLSMLGGGVGVGVGIRTSDNKSTGVMSHLNTYDACSLAYKQDGVRRGSYAMYLNNNHPDVLQFIEMRKPTGDHNIRCLNLHHGLNISDEFMELIEKCDGGGNIDDTWNLIDPHTKKITTVGARDLWQRILETRMKTGEPYICFIDTCNKHMYDFQKKKGLTIKQSNLCVAPETMILTEDGQFPIKDLEGKIIKVWNGNEFSSVTVVKTGTEKELLEVELSNGCTLSCTPEHKFIIVKSYTEAKKQKTDDNAIANAERVDAQDLKPRMKLIKFDLPTLFGNSEHDIKYPYTHGFFCGDGTYTKYGKPQLSLYGDKKELLTYLDVRTMTGLEDASGRLNTWLPLDLAPKFDVPINSSLECRMEWLAGYLDADGCVFRNGTNESIQVSCIHLDFLKRIQLLLIGMGVTSKITKLHDEKITTMPDGKGGQKPYSCKPIWRLFISSSGLYHLSEQGFETRRLKWEPRQPQRNAERFVEVLKVNKTGRVDDTYCFTEPINHAGVFNGILTGQCSEIILPTDSTRTAVCCLSSLNLEYYDEWKDNDLFIKDVMEMLDNALTIFIEKAPPTISRAVNSAKKERSIGIGVLGFHSFLQQKNISFESDEAAKLNIDIFTKLRSKIDTFNLVLGSLRGSPEDAEGTGRRFCCTMAVAPTATSSIIMGNTSPSVEPFRANAYRQDTLSGSFLNKNRYLSRILSQRLNVKEINEVWSNIVSNGGSVQQLPNNLLSEQEKQVFKTAFEINQKWVIKHAADRQKYIDQSQSINLFLKPDIHKRELHSLHLNAWKSGLKTLYYLRSEKIADADKISSNHMINSINFTNIKESIKDSIKVSILEVRNKEKNYEEKICKLTNGRRLSGCFACE.

Residues T68, 83–84 (SC), and G112 contribute to the substrate site. A disulfide bridge links C84 with C626. N270 (proton acceptor) is an active-site residue. Residues 378–508 (LPTLFGNSEH…IQLLLIGMGV (131 aa)) enclose the DOD-type homing endonuclease domain. Catalysis depends on C611, which acts as the Cysteine radical intermediate. Residue E613 is the Proton acceptor of the active site. 751–755 (PTATS) contributes to the substrate binding site.

The protein belongs to the ribonucleoside diphosphate reductase large chain family. As to quaternary structure, heterotetramer composed of a homodimer of the large subunit (R1) and a homodimer of the small subunit (R2). Larger multisubunit protein complex are also active, composed of (R1)n(R2)n.

It catalyses the reaction a 2'-deoxyribonucleoside 5'-diphosphate + [thioredoxin]-disulfide + H2O = a ribonucleoside 5'-diphosphate + [thioredoxin]-dithiol. Its activity is regulated as follows. Under complex allosteric control mediated by deoxynucleoside triphosphates and ATP binding. The type of nucleotide bound at the specificity site determines substrate preference. It seems probable that ATP makes the enzyme reduce CDP and UDP, dGTP favors ADP reduction and dTTP favors GDP reduction. Functionally, ribonucleoside-diphosphate reductase holoenzyme provides the precursors necessary for viral DNA synthesis. Allows virus growth in non-dividing cells. Catalyzes the biosynthesis of deoxyribonucleotides from the corresponding ribonucleotides. This chain is Ribonucleoside-diphosphate reductase large subunit, found in Acheta domesticus (House cricket).